A 161-amino-acid polypeptide reads, in one-letter code: SsrA-binding protein (161 aa).

The interval 1–23 (MATKKNEQIKGRTDGLVAENRRS) is disordered.

It belongs to the SmpB family.

Its subcellular location is the cytoplasm. Functionally, required for rescue of stalled ribosomes mediated by trans-translation. Binds to transfer-messenger RNA (tmRNA), required for stable association of tmRNA with ribosomes. tmRNA and SmpB together mimic tRNA shape, replacing the anticodon stem-loop with SmpB. tmRNA is encoded by the ssrA gene; the 2 termini fold to resemble tRNA(Ala) and it encodes a 'tag peptide', a short internal open reading frame. During trans-translation Ala-aminoacylated tmRNA acts like a tRNA, entering the A-site of stalled ribosomes, displacing the stalled mRNA. The ribosome then switches to translate the ORF on the tmRNA; the nascent peptide is terminated with the 'tag peptide' encoded by the tmRNA and targeted for degradation. The ribosome is freed to recommence translation, which seems to be the essential function of trans-translation. The protein is SsrA-binding protein of Hyphomonas neptunium (strain ATCC 15444).